The sequence spans 123 residues: Class I hydrophobin pri2 (123 aa).

The N-terminal stretch at 1 to 18 is a signal peptide; sequence MVAIKSLAILALPVMAMA. Disulfide bonds link Cys31–Cys102, Cys38–Cys96, Cys39–Cys84, and Cys103–Cys116. N-linked (GlcNAc...) asparagine glycosylation is found at Asn33 and Asn40.

This sequence belongs to the fungal hydrophobin family. Self-assembles to form functional amyloid fibrils called rodlets. Self-assembly into fibrillar rodlets occurs spontaneously at hydrophobic:hydrophilic interfaces and the rodlets further associate laterally to form amphipathic monolayers.

The protein resides in the secreted. The protein localises to the cell wall. Its function is as follows. Aerial growth, conidiation, and dispersal of filamentous fungi in the environment rely upon a capability of their secreting small amphipathic proteins called hydrophobins (HPBs) with low sequence identity. Class I can self-assemble into an outermost layer of rodlet bundles on aerial cell surfaces, conferring cellular hydrophobicity that supports fungal growth, development and dispersal; whereas Class II form highly ordered films at water-air interfaces through intermolecular interactions but contribute nothing to the rodlet structure. The chain is Class I hydrophobin pri2 from Cyclocybe aegerita (Black poplar mushroom).